Consider the following 87-residue polypeptide: MSILSALTSISNPMKSTKSSVANGGGRLSMGSNSVACGSCGGGNSSSGTINNADGSQTTYYSYTSPVYTYNYSYSYSSSGSSSCGCH.

Over residues 1–22 (MSILSALTSISNPMKSTKSSVA) the composition is skewed to polar residues. The disordered stretch occupies residues 1 to 24 (MSILSALTSISNPMKSTKSSVANG).

This sequence belongs to the hssA/B family.

In Dictyostelium discoideum (Social amoeba), this protein is HssA/B-like protein 8 (hssl8).